A 316-amino-acid polypeptide reads, in one-letter code: 4-hydroxy-3-methylbut-2-enyl diphosphate reductase (316 aa).

Position 12 (Cys-12) interacts with [4Fe-4S] cluster. Positions 43 and 81 each coordinate (2E)-4-hydroxy-3-methylbut-2-enyl diphosphate. His-43 and His-81 together coordinate dimethylallyl diphosphate. Isopentenyl diphosphate is bound by residues His-43 and His-81. Cys-103 contributes to the [4Fe-4S] cluster binding site. His-131 lines the (2E)-4-hydroxy-3-methylbut-2-enyl diphosphate pocket. His-131 is a dimethylallyl diphosphate binding site. Isopentenyl diphosphate is bound at residue His-131. Glu-133 (proton donor) is an active-site residue. Thr-170 provides a ligand contact to (2E)-4-hydroxy-3-methylbut-2-enyl diphosphate. [4Fe-4S] cluster is bound at residue Cys-198. Residues Ser-226, Asn-228, and Ser-271 each contribute to the (2E)-4-hydroxy-3-methylbut-2-enyl diphosphate site. Dimethylallyl diphosphate-binding residues include Ser-226, Asn-228, and Ser-271. Positions 226, 228, and 271 each coordinate isopentenyl diphosphate.

This sequence belongs to the IspH family. The cofactor is [4Fe-4S] cluster.

The enzyme catalyses isopentenyl diphosphate + 2 oxidized [2Fe-2S]-[ferredoxin] + H2O = (2E)-4-hydroxy-3-methylbut-2-enyl diphosphate + 2 reduced [2Fe-2S]-[ferredoxin] + 2 H(+). The catalysed reaction is dimethylallyl diphosphate + 2 oxidized [2Fe-2S]-[ferredoxin] + H2O = (2E)-4-hydroxy-3-methylbut-2-enyl diphosphate + 2 reduced [2Fe-2S]-[ferredoxin] + 2 H(+). The protein operates within isoprenoid biosynthesis; dimethylallyl diphosphate biosynthesis; dimethylallyl diphosphate from (2E)-4-hydroxy-3-methylbutenyl diphosphate: step 1/1. Its pathway is isoprenoid biosynthesis; isopentenyl diphosphate biosynthesis via DXP pathway; isopentenyl diphosphate from 1-deoxy-D-xylulose 5-phosphate: step 6/6. In terms of biological role, catalyzes the conversion of 1-hydroxy-2-methyl-2-(E)-butenyl 4-diphosphate (HMBPP) into a mixture of isopentenyl diphosphate (IPP) and dimethylallyl diphosphate (DMAPP). Acts in the terminal step of the DOXP/MEP pathway for isoprenoid precursor biosynthesis. The chain is 4-hydroxy-3-methylbut-2-enyl diphosphate reductase from Bacillus cereus (strain AH820).